The following is a 74-amino-acid chain: Small ribosomal subunit protein bS18 (74 aa).

Belongs to the bacterial ribosomal protein bS18 family. Part of the 30S ribosomal subunit. Forms a tight heterodimer with protein bS6.

Functionally, binds as a heterodimer with protein bS6 to the central domain of the 16S rRNA, where it helps stabilize the platform of the 30S subunit. The polypeptide is Small ribosomal subunit protein bS18 (Gloeobacter violaceus (strain ATCC 29082 / PCC 7421)).